Here is a 129-residue protein sequence, read N- to C-terminus: uncharacterized protein (129 aa).

The protein belongs to the HesB/IscA family.

This is an uncharacterized protein from Buchnera aphidicola subsp. Schizaphis graminum (strain Sg).